The sequence spans 212 residues: MGTNKPVVIGIAGGSGSGKTSVTKAIFDHFKGHSILILEQDYYYKDQSHLPMEERLKTNYDHPLAFDNDLLIDHLQQLLAYEQVEKPIYDYTLHTRSEKIIPVEPKDVIILEGILILEDPRLCELMDIKVFVDTDADLRILRRMQRDIEERGRTMDSVIDQYVNVVRPMHNQFIEPSKKFADIIIPEGGQNHVAIDIMVTKIATILEQKVNL.

13 to 20 is an ATP binding site; sequence GGSGSGKT.

The protein belongs to the uridine kinase family.

It is found in the cytoplasm. It catalyses the reaction uridine + ATP = UMP + ADP + H(+). The catalysed reaction is cytidine + ATP = CMP + ADP + H(+). The protein operates within pyrimidine metabolism; CTP biosynthesis via salvage pathway; CTP from cytidine: step 1/3. It functions in the pathway pyrimidine metabolism; UMP biosynthesis via salvage pathway; UMP from uridine: step 1/1. This is Uridine kinase from Bacillus mycoides (strain KBAB4) (Bacillus weihenstephanensis).